The chain runs to 568 residues: Autophagy-related protein 17 (568 aa).

Disordered regions lie at residues 1–59 (MASF…DSSE) and 522–568 (SYEM…ERPF). The span at 522–546 (SYEMEAHGEPENEGKVETAYERETE) shows a compositional bias: basic and acidic residues.

Belongs to the ATG17 family.

Its subcellular location is the cytoplasm. It localises to the preautophagosomal structure membrane. Its function is as follows. Autophagy-specific protein that functions in response to autophagy-inducing signals as a scaffold to recruit other ATG proteins to organize pre-autophagosomal structure (PAS) formation. Modulates the timing and magnitude of the autophagy response, such as the size of the sequestering vesicles. Plays particularly a role in pexophagy and nucleophagy. In Neurospora crassa (strain ATCC 24698 / 74-OR23-1A / CBS 708.71 / DSM 1257 / FGSC 987), this protein is Autophagy-related protein 17 (apg-9).